A 282-amino-acid chain; its full sequence is Biotin synthase (282 aa).

The Radical SAM core domain maps to 1–230 (MSDNKIYLCA…NQMLMIAGGR (230 aa)). [4Fe-4S] cluster-binding residues include Cys19, Cys23, and Cys26. The [2Fe-2S] cluster site is built by Cys63, Cys98, and Cys156.

The protein belongs to the radical SAM superfamily. Biotin synthase family. As to quaternary structure, homodimer. The cofactor is [4Fe-4S] cluster. [2Fe-2S] cluster serves as cofactor.

The catalysed reaction is (4R,5S)-dethiobiotin + (sulfur carrier)-SH + 2 reduced [2Fe-2S]-[ferredoxin] + 2 S-adenosyl-L-methionine = (sulfur carrier)-H + biotin + 2 5'-deoxyadenosine + 2 L-methionine + 2 oxidized [2Fe-2S]-[ferredoxin]. Its pathway is cofactor biosynthesis; biotin biosynthesis; biotin from 7,8-diaminononanoate: step 2/2. In terms of biological role, catalyzes the conversion of dethiobiotin (DTB) to biotin by the insertion of a sulfur atom into dethiobiotin via a radical-based mechanism. In Aliarcobacter butzleri (strain RM4018) (Arcobacter butzleri), this protein is Biotin synthase.